The sequence spans 363 residues: Molybdenum import ATP-binding protein ModC (363 aa).

Residues 1-230 (MISARFSGRQ…PNLPLIHRPD (230 aa)) form the ABC transporter domain. 31–38 (GPSGCGKT) provides a ligand contact to ATP. In terms of domain architecture, Mop spans 289 to 359 (DTTILNALPA…LKAMALSAPA (71 aa)).

The protein belongs to the ABC transporter superfamily. Molybdate importer (TC 3.A.1.8) family. In terms of assembly, the complex is composed of two ATP-binding proteins (ModC), two transmembrane proteins (ModB) and a solute-binding protein (ModA).

The protein resides in the cell inner membrane. The catalysed reaction is molybdate(out) + ATP + H2O = molybdate(in) + ADP + phosphate + H(+). Functionally, part of the ABC transporter complex ModABC involved in molybdenum import. Responsible for energy coupling to the transport system. The sequence is that of Molybdenum import ATP-binding protein ModC from Rhodobacter capsulatus (Rhodopseudomonas capsulata).